We begin with the raw amino-acid sequence, 342 residues long: N-acetyl-gamma-glutamyl-phosphate reductase (342 aa).

Cys-146 is an active-site residue.

The protein belongs to the NAGSA dehydrogenase family. Type 1 subfamily.

The protein localises to the cytoplasm. The enzyme catalyses N-acetyl-L-glutamate 5-semialdehyde + phosphate + NADP(+) = N-acetyl-L-glutamyl 5-phosphate + NADPH + H(+). It participates in amino-acid biosynthesis; L-arginine biosynthesis; N(2)-acetyl-L-ornithine from L-glutamate: step 3/4. Catalyzes the NADPH-dependent reduction of N-acetyl-5-glutamyl phosphate to yield N-acetyl-L-glutamate 5-semialdehyde. This chain is N-acetyl-gamma-glutamyl-phosphate reductase, found in Streptomyces coelicolor (strain ATCC BAA-471 / A3(2) / M145).